The sequence spans 178 residues: Vegetative protein (178 aa).

Disordered regions lie at residues Ala67–Gly102 and Asn138–Leu158. Residues Pro76–Gly90 show a composition bias toward low complexity.

This is Vegetative protein (vegA) from Myxococcus xanthus.